A 380-amino-acid chain; its full sequence is Cytochrome b (380 aa).

4 helical membrane-spanning segments follow: residues 34-54, 78-99, 114-134, and 179-199; these read FGSL…LLAT, WLIR…YLHI, WNTG…GYVL, and FFAL…IHLT. 2 residues coordinate heme b: His-84 and His-98. Heme b-binding residues include His-183 and His-197. Residue His-202 coordinates a ubiquinone. Transmembrane regions (helical) follow at residues 227 to 247, 289 to 309, 321 to 341, and 348 to 368; these read LKDI…ALFS, LGGV…PLLH, LSQL…WVGS, and FIII…LLFP.

This sequence belongs to the cytochrome b family. In terms of assembly, the cytochrome bc1 complex contains 11 subunits: 3 respiratory subunits (MT-CYB, CYC1 and UQCRFS1), 2 core proteins (UQCRC1 and UQCRC2) and 6 low-molecular weight proteins (UQCRH/QCR6, UQCRB/QCR7, UQCRQ/QCR8, UQCR10/QCR9, UQCR11/QCR10 and a cleavage product of UQCRFS1). This cytochrome bc1 complex then forms a dimer. The cofactor is heme b.

Its subcellular location is the mitochondrion inner membrane. Functionally, component of the ubiquinol-cytochrome c reductase complex (complex III or cytochrome b-c1 complex) that is part of the mitochondrial respiratory chain. The b-c1 complex mediates electron transfer from ubiquinol to cytochrome c. Contributes to the generation of a proton gradient across the mitochondrial membrane that is then used for ATP synthesis. The chain is Cytochrome b (MT-CYB) from Uria aalge (Common mure).